A 375-amino-acid chain; its full sequence is Protein RecA (375 aa).

Position 88-95 (88-95) interacts with ATP; that stretch reads GPESSGKT.

It belongs to the RecA family.

It localises to the cytoplasm. Can catalyze the hydrolysis of ATP in the presence of single-stranded DNA, the ATP-dependent uptake of single-stranded DNA by duplex DNA, and the ATP-dependent hybridization of homologous single-stranded DNAs. It interacts with LexA causing its activation and leading to its autocatalytic cleavage. In Rhodopirellula baltica (strain DSM 10527 / NCIMB 13988 / SH1), this protein is Protein RecA.